Here is a 264-residue protein sequence, read N- to C-terminus: Protein OXIDATIVE STRESS 3 LIKE 1 (264 aa).

Disordered regions lie at residues 1-76 (MDCV…GPLE) and 178-225 (TGEG…QGSF). Residues 29–43 (PSDSSSSPSSSASSS) are compositionally biased toward low complexity. Basic and acidic residues predominate over residues 47–56 (NSDDGEKSSE). Over residues 57–67 (DGGDDAGENEV) the composition is skewed to acidic residues. A compositionally biased stretch (low complexity) spans 179-201 (GEGSSSGGDSSPGSSPTTSGSPP). Over residues 203–212 (QLHHHQHQMK) the composition is skewed to basic residues.

It is found in the nucleus. Its function is as follows. Promotes slightly the tolerance to zinc (Zn) and to oxidizing chemicals (e.g. diamide). This is Protein OXIDATIVE STRESS 3 LIKE 1 from Arabidopsis thaliana (Mouse-ear cress).